Reading from the N-terminus, the 114-residue chain is NLP effector protein 1 (114 aa).

It belongs to the Necrosis inducing protein (NPP1) family.

It is found in the secreted. It localises to the host cytoplasm. Probable secreted effector that may act as a pathogen-associated molecular pattern (PAMP) recognized by the plant immune system. Seems not to induce necrosis, neither in several susceptible or resistant Vitis species nor in the dicot model plant Nicotiana benthamiana. The chain is NLP effector protein 1 from Plasmopara viticola (Downy mildew of grapevine).